A 423-amino-acid polypeptide reads, in one-letter code: D-tagatose-1,6-bisphosphate aldolase subunit GatZ (423 aa).

It belongs to the GatZ/KbaZ family. GatZ subfamily. Forms a complex with GatY.

It participates in carbohydrate metabolism; D-tagatose 6-phosphate degradation; D-glyceraldehyde 3-phosphate and glycerone phosphate from D-tagatose 6-phosphate: step 2/2. Component of the tagatose-1,6-bisphosphate aldolase GatYZ that is required for full activity and stability of the Y subunit. Could have a chaperone-like function for the proper and stable folding of GatY. When expressed alone, GatZ does not show any aldolase activity. Is involved in the catabolism of galactitol. The sequence is that of D-tagatose-1,6-bisphosphate aldolase subunit GatZ from Salmonella newport (strain SL254).